The chain runs to 327 residues: Taste receptor type 2 member 102 (327 aa).

At 1–7 (MEPVIYS) the chain is on the extracellular side. The chain crosses the membrane as a helical span at residues 8–28 (FATLLIHVEFIFGNLSNGFIV). Residues 29-46 (LSNFWDWVIKRKLSTIDK) lie on the Cytoplasmic side of the membrane. Residues 47 to 67 (ILLTLAISRITLIWEIYTWFT) traverse the membrane as a helical segment. Topologically, residues 68–87 (SVYGPSSFAIGMKLQILYFT) are extracellular. A helical transmembrane segment spans residues 88–108 (WILSSHFSLWFATALSIFYLL). Topologically, residues 109 to 124 (RIANCSWKIFLYLKWR) are cytoplasmic. A helical membrane pass occupies residues 125–145 (LKQVIVGMLLASLVFLPGILT). Topologically, residues 146 to 179 (QRTLEERPYRYGGNTSEDSMETDFARFTELILFN) are extracellular. Residues asparagine 159 and asparagine 179 are each glycosylated (N-linked (GlcNAc...) asparagine). A helical membrane pass occupies residues 180-200 (LTIFSVIPFSLASISFLLLIF). Topologically, residues 201 to 229 (SLWKHLRKMQLSSRGHGDPSTKAHTNALR) are cytoplasmic. Residues 230–250 (IMVSFLLLYSIYFLSLLLSWI) form a helical membrane-spanning segment. The Extracellular segment spans residues 251-260 (AQKHHSKLVD). A helical membrane pass occupies residues 261-281 (IIGIITGLMYPSAHSFILILG). The Cytoplasmic segment spans residues 282-327 (NSKLMQTSLWILSHLRCRLKGENILNPSGNQVTSCYIFCIANKSVS).

Belongs to the G-protein coupled receptor T2R family.

Its subcellular location is the membrane. In terms of biological role, putative taste receptor which may play a role in the perception of bitterness. This Rattus norvegicus (Rat) protein is Taste receptor type 2 member 102.